Consider the following 197-residue polypeptide: Small ribosomal subunit protein uS4B (197 aa).

In terms of domain architecture, S4 RNA-binding spans 88-150 (SRLDNMVYRM…SRKTEMFVNN (63 aa)).

The protein belongs to the universal ribosomal protein uS4 family. As to quaternary structure, part of the 30S ribosomal subunit. Contacts protein S5. The interaction surface between S4 and S5 is involved in control of translational fidelity.

In terms of biological role, one of the primary rRNA binding proteins, it binds directly to 16S rRNA where it nucleates assembly of the body of the 30S subunit. Its function is as follows. With S5 and S12 plays an important role in translational accuracy. The polypeptide is Small ribosomal subunit protein uS4B (Clostridium perfringens (strain SM101 / Type A)).